The primary structure comprises 1410 residues: ABC transporter C family member 13 (1410 aa).

Helical transmembrane passes span 23–43, 60–80, 88–108, 122–142, 148–168, 391–411, 474–494, and 505–525; these read IVLG…LTIT, LLYV…VLLV, VILC…ILSL, ILCF…NMIF, QEIC…VLRI, LSGL…SVLI, VFFW…LFAL, and FTCL…PWVI. The ABC transmembrane type-1 1 domain occupies 255–530; sequence CNNYSTPSLI…FPWVINGLID (276 aa). The 228-residue stretch at 564 to 791 folds into the ABC transporter 1 domain; the sequence is VCVEDASCTW…ISPTFSLTNE (228 aa). 602–609 serves as a coordination point for ATP; it reads GEVGSGKT. 6 helical membrane passes run 844-864, 889-909, 963-985, 990-1009, 1087-1107, and 1111-1131; these read AVFS…LMQG, TSFY…LTLV, SLPF…IVVL, VLFL…LQVF, IVLF…PISF, and GLVG…GSLL. One can recognise an ABC transmembrane type-1 2 domain in the interval 852 to 1139; that stretch reads TIVILVSAVL…LLTSFTETEK (288 aa). The ABC transporter 2 domain maps to 1174–1407; sequence VEFHNVTMRY…DSSTFSSFVR (234 aa). Residue 1208-1215 coordinates ATP; it reads GRTGAGKS.

The protein belongs to the ABC transporter superfamily. ABCC family. Conjugate transporter (TC 3.A.1.208) subfamily. In terms of tissue distribution, ubiquitous.

The protein resides in the membrane. The enzyme catalyses ATP + H2O + xenobioticSide 1 = ADP + phosphate + xenobioticSide 2.. In terms of biological role, pump for glutathione S-conjugates. The chain is ABC transporter C family member 13 (ABCC13) from Arabidopsis thaliana (Mouse-ear cress).